The chain runs to 537 residues: uncharacterized protein (537 aa).

This is an uncharacterized protein from Bacillus subtilis (strain 168).